A 268-amino-acid polypeptide reads, in one-letter code: Probable 1-acyl-sn-glycerol-3-phosphate acyltransferase (268 aa).

An HXXXXD motif motif is present at residues 92 to 97 (HKSNLD).

This sequence belongs to the 1-acyl-sn-glycerol-3-phosphate acyltransferase family.

The enzyme catalyses a 1-acyl-sn-glycero-3-phosphate + an acyl-CoA = a 1,2-diacyl-sn-glycero-3-phosphate + CoA. The protein operates within phospholipid metabolism; CDP-diacylglycerol biosynthesis; CDP-diacylglycerol from sn-glycerol 3-phosphate: step 2/3. In terms of biological role, converts lysophosphatidic acid (LPA) into phosphatidic acid by incorporating acyl moiety at the 2 position. The chain is Probable 1-acyl-sn-glycerol-3-phosphate acyltransferase (plsC) from Mycoplasma genitalium (strain ATCC 33530 / DSM 19775 / NCTC 10195 / G37) (Mycoplasmoides genitalium).